Reading from the N-terminus, the 86-residue chain is Large ribosomal subunit protein bL31 (86 aa).

Residues 65-86 (YGMGSANSATSKEQKEEKDSNK) are disordered. Basic and acidic residues predominate over residues 76–86 (KEQKEEKDSNK).

This sequence belongs to the bacterial ribosomal protein bL31 family. Type A subfamily. In terms of assembly, part of the 50S ribosomal subunit.

Its function is as follows. Binds the 23S rRNA. This Prochlorococcus marinus (strain MIT 9312) protein is Large ribosomal subunit protein bL31.